Reading from the N-terminus, the 318-residue chain is Galactinol synthase 1 (318 aa).

Residue Lys102 is part of the active site. Asp118, Asp120, and His244 together coordinate Mn(2+).

It belongs to the glycosyltransferase 8 family. Galactosyltransferase subfamily. It depends on a divalent metal cation as a cofactor. Expressed in seeds, mostly in radicle tips.

It is found in the cytoplasm. The catalysed reaction is myo-inositol + UDP-alpha-D-galactose = alpha-D-galactosyl-(1-&gt;3)-1D-myo-inositol + UDP + H(+). Its function is as follows. Galactinol synthase involved in the biosynthesis of raffinose family oligosaccharides (RFOs) that function as osmoprotectants. May promote plant stress tolerance. The chain is Galactinol synthase 1 (GOLS1) from Solanum lycopersicum (Tomato).